Consider the following 736-residue polypeptide: Fidgetin (736 aa).

Disordered stretches follow at residues Gly118 to His155, Thr180 to Gly248, Ile272 to Ala295, and Ser341 to Gln438. The span at Val128–Ser150 shows a compositional bias: low complexity. Pro residues predominate over residues Gln205–Leu214. Over residues Pro216 to Pro232 the composition is skewed to low complexity. Residues Asp352–Asp368 show a composition bias toward polar residues. Residues Ala467 and Gly507–Leu512 contribute to the ATP site.

It belongs to the AAA ATPase family.

The protein localises to the nucleus matrix. Its subcellular location is the cytoplasm. It localises to the cytoskeleton. The protein resides in the microtubule organizing center. It is found in the centrosome. Functionally, ATP-dependent microtubule severing protein. Severs microtubules along their length and depolymerizes their ends, primarily the minus-end, suppressing microtubule growth from and attachment to centrosomes. Microtubule severing may promote rapid reorganization of cellular microtubule arrays and the release of microtubules from the centrosome following nucleation. Microtubule release from the mitotic spindle poles may allow depolymerization of the microtubule end proximal to the spindle pole, leading to poleward microtubule flux and poleward motion of chromosome. The sequence is that of Fidgetin (fign) from Danio rerio (Zebrafish).